We begin with the raw amino-acid sequence, 154 residues long: Protein X (154 aa).

The tract at residues 68–117 is mitochondrial targeting sequence; the sequence is PCALRFTSARRMETTVNAHRNLPKVLHKRTLGLSAMSTTDLEAYFKDCVF.

The protein belongs to the orthohepadnavirus protein X family. As to quaternary structure, may form homodimer. May interact with host CEBPA, CFLAR, CREB1, DDB1, E4F1, HBXIP, HSPD1/HSP60, NFKBIA, POLR2E and SMAD4. Interacts with host SMC5-SMC6 complex and induces its degradation. Interacts with host TRPC4AP; leading to prevent ubiquitination of TRPC4AP. Interacts with host PLSCR1; this interaction promotes ubiquitination and degradation of HBx and impairs HBx-mediated cell proliferation. A fraction may be phosphorylated in insect cells and HepG2 cells, a human hepatoblastoma cell line. Phosphorylated in vitro by host protein kinase C or mitogen-activated protein kinase. N-acetylated in insect cells.

It localises to the host cytoplasm. The protein resides in the host nucleus. Its subcellular location is the host mitochondrion. Multifunctional protein that plays a role in silencing host antiviral defenses and promoting viral transcription. Does not seem to be essential for HBV infection. May be directly involved in development of cirrhosis and liver cancer (hepatocellular carcinoma). Most of cytosolic activities involve modulation of cytosolic calcium. The effect on apoptosis is controversial depending on the cell types in which the studies have been conducted. May induce apoptosis by localizing in mitochondria and causing loss of mitochondrial membrane potential. May also modulate apoptosis by binding host CFLAR, a key regulator of the death-inducing signaling complex (DISC). Promotes viral transcription by using the host E3 ubiquitin ligase DDB1 to target the SMC5-SMC6 complex to proteasomal degradation. This host complex would otherwise bind to viral episomal DNA, and prevents its transcription. Moderately stimulates transcription of many different viral and cellular transcription elements. Promoters and enhancers stimulated by HBx contain DNA binding sites for NF-kappa-B, AP-1, AP-2, c-EBP, ATF/CREB, or the calcium-activated factor NF-AT. This is Protein X from Homo sapiens (Human).